Here is a 231-residue protein sequence, read N- to C-terminus: NADH-ubiquinone oxidoreductase chain 4 (231 aa).

7 helical membrane-spanning segments follow: residues 1 to 21, 34 to 54, 62 to 82, 86 to 106, 118 to 138, 169 to 189, and 211 to 231; these read PIAG…YGMI, MFIP…LTCL, LIAY…SIQT, LSGA…LFCL, ILIL…WWLL, TIIL…HIFL, and LLMT…ELVM.

Belongs to the complex I subunit 4 family.

It is found in the mitochondrion membrane. It carries out the reaction a ubiquinone + NADH + 5 H(+)(in) = a ubiquinol + NAD(+) + 4 H(+)(out). In terms of biological role, core subunit of the mitochondrial membrane respiratory chain NADH dehydrogenase (Complex I) that is believed to belong to the minimal assembly required for catalysis. Complex I functions in the transfer of electrons from NADH to the respiratory chain. The immediate electron acceptor for the enzyme is believed to be ubiquinone. The chain is NADH-ubiquinone oxidoreductase chain 4 (MT-ND4) from Causus rhombeatus (Rhombic night adder).